A 463-amino-acid chain; its full sequence is Glutamate--tRNA ligase 1 (463 aa).

The short motif at 10–20 is the 'HIGH' region element; it reads PSPTGFLHIGS. The 'KMSKS' region motif lies at 239–243; the sequence is KLSKR. Lysine 242 serves as a coordination point for ATP.

Belongs to the class-I aminoacyl-tRNA synthetase family. Glutamate--tRNA ligase type 1 subfamily. Monomer.

It localises to the cytoplasm. It carries out the reaction tRNA(Glu) + L-glutamate + ATP = L-glutamyl-tRNA(Glu) + AMP + diphosphate. Catalyzes the attachment of glutamate to tRNA(Glu) in a two-step reaction: glutamate is first activated by ATP to form Glu-AMP and then transferred to the acceptor end of tRNA(Glu). The sequence is that of Glutamate--tRNA ligase 1 from Rickettsia canadensis (strain McKiel).